We begin with the raw amino-acid sequence, 557 residues long: Dihydroxy-acid dehydratase (557 aa).

A Mg(2+)-binding site is contributed by D78. C119 contributes to the [2Fe-2S] cluster binding site. Positions 120 and 121 each coordinate Mg(2+). The residue at position 121 (K121) is an N6-carboxylysine. C192 provides a ligand contact to [2Fe-2S] cluster. Residue E442 participates in Mg(2+) binding. Catalysis depends on S468, which acts as the Proton acceptor.

The protein belongs to the IlvD/Edd family. As to quaternary structure, homodimer. Requires [2Fe-2S] cluster as cofactor. It depends on Mg(2+) as a cofactor.

It catalyses the reaction (2R)-2,3-dihydroxy-3-methylbutanoate = 3-methyl-2-oxobutanoate + H2O. The enzyme catalyses (2R,3R)-2,3-dihydroxy-3-methylpentanoate = (S)-3-methyl-2-oxopentanoate + H2O. It functions in the pathway amino-acid biosynthesis; L-isoleucine biosynthesis; L-isoleucine from 2-oxobutanoate: step 3/4. The protein operates within amino-acid biosynthesis; L-valine biosynthesis; L-valine from pyruvate: step 3/4. In terms of biological role, functions in the biosynthesis of branched-chain amino acids. Catalyzes the dehydration of (2R,3R)-2,3-dihydroxy-3-methylpentanoate (2,3-dihydroxy-3-methylvalerate) into 2-oxo-3-methylpentanoate (2-oxo-3-methylvalerate) and of (2R)-2,3-dihydroxy-3-methylbutanoate (2,3-dihydroxyisovalerate) into 2-oxo-3-methylbutanoate (2-oxoisovalerate), the penultimate precursor to L-isoleucine and L-valine, respectively. In Bacillus cereus (strain ZK / E33L), this protein is Dihydroxy-acid dehydratase.